The following is a 276-amino-acid chain: Myoblast determination protein 1 homolog 1 (276 aa).

The region spanning 84–135 is the bHLH domain; that stretch reads DRRKAATMRERRRLSKVNDAFETLKRCTSTNPNQRLPKVDILRNAISYIESL. The tract at residues 228–253 is disordered; that stretch reads CPAVQDGSEGSSPCSPGDGSIASENG.

As to quaternary structure, efficient DNA binding requires dimerization with another bHLH protein.

The protein localises to the nucleus. Its function is as follows. May act as a transcriptional activator that promotes transcription of muscle-specific target genes and plays a role in muscle differentiation. This Oncorhynchus mykiss (Rainbow trout) protein is Myoblast determination protein 1 homolog 1 (myod1).